The following is a 382-amino-acid chain: Transforming growth factor beta-1 proprotein (382 aa).

Positions 1 to 21 (MEVLWMLLVLLVLHLSSLAMS) are cleaved as a signal peptide. A straightjacket domain region spans residues 22-65 (LSTCKAVDMEEVRKRRIEAIRGQILSKLKLDKTPDVDSEKMTVP). An arm domain region spans residues 66–263 (SEAIFLYNST…SMPAERIDTV (198 aa)). N-linked (GlcNAc...) asparagine glycosylation is found at Asn-73, Asn-123, and Asn-166. The segment at 218 to 242 (PTPQAKDIDIEGFPALRGDLASLSS) is bowtie tail. The Cell attachment site signature appears at 234–236 (RGD). Disulfide bonds link Cys-277–Cys-286, Cys-285–Cys-348, Cys-314–Cys-379, and Cys-318–Cys-381.

This sequence belongs to the TGF-beta family. In terms of assembly, latency-associated peptide: Homodimer; disulfide-linked. Latency-associated peptide: Interacts with Transforming growth factor beta-1 (TGF-beta-1) chain; interaction is non-covalent and maintains (TGF-beta-1) in a latent state; each Latency-associated peptide (LAP) monomer interacts with TGF-beta-1 in the other monomer. Transforming growth factor beta-1: Homodimer; disulfide-linked. Transforming growth factor beta-1: Interacts with TGF-beta receptors (tgfbr1 and tgfbr2), leading to signal transduction. In terms of processing, transforming growth factor beta-1 proprotein: The precursor proprotein is cleaved in the Golgi apparatus to form Transforming growth factor beta-1 (TGF-beta-1) and Latency-associated peptide (LAP) chains, which remain non-covalently linked, rendering TGF-beta-1 inactive.

It localises to the secreted. The protein resides in the extracellular space. Its subcellular location is the extracellular matrix. Its function is as follows. Transforming growth factor beta-1 proprotein: Precursor of the Latency-associated peptide (LAP) and Transforming growth factor beta-1 (TGF-beta-1) chains, which constitute the regulatory and active subunit of TGF-beta-1, respectively. Functionally, required to maintain the Transforming growth factor beta-1 (TGF-beta-1) chain in a latent state during storage in extracellular matrix. Associates non-covalently with TGF-beta-1 and regulates its activation via interaction with 'milieu molecules', such as LTBP1, LRRC32/GARP and LRRC33/NRROS, that control activation of TGF-beta-1. Interaction with integrins (ITGAV:ITGB6 or ITGAV:ITGB8) results in distortion of the Latency-associated peptide chain and subsequent release of the active TGF-beta-1. Transforming growth factor beta-1: Multifunctional protein that regulates the growth and differentiation of various cell types and is involved in various processes, such as normal development, immune function, microglia function and responses to neurodegeneration. Activation into mature form follows different steps: following cleavage of the proprotein in the Golgi apparatus, Latency-associated peptide (LAP) and Transforming growth factor beta-1 (TGF-beta-1) chains remain non-covalently linked rendering TGF-beta-1 inactive during storage in extracellular matrix. At the same time, LAP chain interacts with 'milieu molecules', such as ltbp1, lrrc32/garp and lrrc33/nrros that control activation of TGF-beta-1 and maintain it in a latent state during storage in extracellular milieus. TGF-beta-1 is released from LAP by integrins (ITGAV:ITGB6 or ITGAV:ITGB8): integrin-binding to LAP stabilizes an alternative conformation of the LAP bowtie tail and results in distortion of the LAP chain and subsequent release of the active TGF-beta-1. Once activated following release of LAP, TGF-beta-1 acts by binding to TGF-beta receptors (tgfbr1 and tgfbr2), which transduce signal. While expressed by many cells types, TGF-beta-1 only has a very localized range of action within cell environment thanks to fine regulation of its activation by Latency-associated peptide chain (LAP) and 'milieu molecules'. Plays an important role in bone remodeling: acts as a potent stimulator of osteoblastic bone formation. Can promote either T-helper 17 cells (Th17) or regulatory T-cells (Treg) lineage differentiation in a concentration-dependent manner. Can induce epithelial-to-mesenchymal transition (EMT) and cell migration in various cell types. This is Transforming growth factor beta-1 proprotein (tgfb1) from Xenopus laevis (African clawed frog).